The primary structure comprises 461 residues: UDP-glycosyltransferase 88B1 (461 aa).

UDP-alpha-D-glucose-binding positions include Ser-278, 340 to 341 (WA), 358 to 366 (HCGWNSSLE), and 380 to 383 (YAEQ).

It belongs to the UDP-glycosyltransferase family.

In terms of biological role, may glycosylate diterpenes or flavonols in leaves. This is UDP-glycosyltransferase 88B1 from Stevia rebaudiana (Stevia).